The chain runs to 77 residues: Conotoxin ArMSGL-0143 (77 aa).

The signal sequence occupies residues 1–22 (MSGLGIMLLTLLLLVFMETSHQ). Residues 23–44 (DAGEKQATQRDAINVRRRRSLT) constitute a propeptide that is removed on maturation. Intrachain disulfides connect Cys51–Cys63, Cys55–Cys71, and Cys62–Cys75. Phenylalanine amide is present on Phe76.

Belongs to the conotoxin O3 superfamily. Expressed by the venom duct.

The protein resides in the secreted. The polypeptide is Conotoxin ArMSGL-0143 (Conus arenatus (Sand-dusted cone)).